We begin with the raw amino-acid sequence, 92 residues long: PqqA binding protein (92 aa).

This sequence belongs to the PqqD family. As to quaternary structure, monomer. Interacts with PqqE.

Its pathway is cofactor biosynthesis; pyrroloquinoline quinone biosynthesis. Functions as a PqqA binding protein and presents PqqA to PqqE, in the pyrroloquinoline quinone (PQQ) biosynthetic pathway. In Stutzerimonas stutzeri (strain A1501) (Pseudomonas stutzeri), this protein is PqqA binding protein.